Reading from the N-terminus, the 266-residue chain is MVSGLTVAEIRKLAGSRAGLDEDFLRALACDKRAGVAEIYRRLKRDENKMAAEAERLQKLYIYENSLIAQGYSPVAGVDEAGRGPLAGPVVAAAVILPPVADLALAGLNDSKKLNPSKRAELAARIKKVALAWSAGISTVEEIFNENIHAASLTAMRRAVLKLKIRPAYLLVDGYRISRLELPQLALTGGDGLSASVAAASILAKVLRDRLMDFYHVQYPQYGFNRHKGYATPEHLAALERYGPCPLHRAGYRPVKNCGSRQKCEG.

The RNase H type-2 domain occupies 73–266 (SPVAGVDEAG…NCGSRQKCEG (194 aa)). Positions 79, 80, and 173 each coordinate a divalent metal cation.

It belongs to the RNase HII family. Requires Mn(2+) as cofactor. It depends on Mg(2+) as a cofactor.

The protein localises to the cytoplasm. The catalysed reaction is Endonucleolytic cleavage to 5'-phosphomonoester.. Endonuclease that specifically degrades the RNA of RNA-DNA hybrids. The protein is Ribonuclease HII of Pelotomaculum thermopropionicum (strain DSM 13744 / JCM 10971 / SI).